The sequence spans 404 residues: Aspartokinase 1 (404 aa).

7–10 (KFGG) contacts ATP. A substrate-binding site is contributed by 25–30 (HIKEAI). Residue Ser-41 coordinates ATP. Residues 52 to 54 (TDS), Glu-79, 130 to 131 (LA), 155 to 158 (RGGS), and Ser-158 each bind substrate. Residues 178–179 (TD) and 184–189 (MTADPR) each bind ATP. Substrate-binding positions include 299–301 (SVD), 355–356 (VT), 369–370 (PI), and 376–377 (SH). The ACT domain occupies 344–404 (AVGAGIMGVP…ALHEVFELSK (61 aa)).

Belongs to the aspartokinase family. In terms of assembly, tetramer consisting of 2 isoforms Alpha (catalytic) and 2 isoforms Beta (function not known).

It carries out the reaction L-aspartate + ATP = 4-phospho-L-aspartate + ADP. It functions in the pathway amino-acid biosynthesis; L-lysine biosynthesis via DAP pathway; (S)-tetrahydrodipicolinate from L-aspartate: step 1/4. The protein operates within amino-acid biosynthesis; L-methionine biosynthesis via de novo pathway; L-homoserine from L-aspartate: step 1/3. It participates in amino-acid biosynthesis; L-threonine biosynthesis; L-threonine from L-aspartate: step 1/5. Its activity is regulated as follows. Diaminopimelate-sensitive. Its function is as follows. Catalyzes the phosphorylation of the beta-carboxyl group of aspartic acid with ATP to yield 4-phospho-L-aspartate, which is involved in the branched biosynthetic pathway leading to the biosynthesis of amino acids threonine, isoleucine and methionine. The protein is Aspartokinase 1 (dapG) of Bacillus subtilis (strain 168).